Consider the following 268-residue polypeptide: MGILDAIKLGKEKEVAHAKTVRKLSGLEQAIKQRPPPRDFVGAVAERAGNGTVALIAEIKKASPSKGLIRSDFQVAAIAEAYRDGGAACLSVLTDQTFFQGKPADLELAKAVSGLPVLRKDFMIDPYQVHEARAMGADAILLILAMLDHGQAIELEAAAQAMGMGVLIEIHDEPELERAMAMQSRLIGINNRDLATFAADLTTSERLASKVDRNRIVISESGIGGHGDVIRLMEAGINGFLIGEQLLRARHIESATREIAQARLHACP.

The protein belongs to the TrpC family.

The enzyme catalyses 1-(2-carboxyphenylamino)-1-deoxy-D-ribulose 5-phosphate + H(+) = (1S,2R)-1-C-(indol-3-yl)glycerol 3-phosphate + CO2 + H2O. It participates in amino-acid biosynthesis; L-tryptophan biosynthesis; L-tryptophan from chorismate: step 4/5. In Ralstonia nicotianae (strain ATCC BAA-1114 / GMI1000) (Ralstonia solanacearum), this protein is Indole-3-glycerol phosphate synthase 2 (trpC2).